Consider the following 261-residue polypeptide: uncharacterized protein (261 aa).

An ABC transporter domain is found at 1–236 (MEIKEITIIG…SRKINEVDNW (236 aa)). Residue 36 to 43 (GPTGSGKS) coordinates ATP.

Belongs to the ABC transporter superfamily.

This is an uncharacterized protein from Methanocaldococcus jannaschii (strain ATCC 43067 / DSM 2661 / JAL-1 / JCM 10045 / NBRC 100440) (Methanococcus jannaschii).